We begin with the raw amino-acid sequence, 247 residues long: Adenosine 5'-phosphosulfate reductase (247 aa).

The [4Fe-4S] cluster site is built by cysteine 133, cysteine 134, cysteine 216, and cysteine 219. The tract at residues 222–247 (KPAPGSDPRSGRWAGASKTECGLHAS) is disordered. Cysteine 242 (nucleophile; cysteine thiosulfonate intermediate) is an active-site residue.

This sequence belongs to the PAPS reductase family. CysH subfamily. [4Fe-4S] cluster is required as a cofactor.

Its subcellular location is the cytoplasm. The catalysed reaction is [thioredoxin]-disulfide + sulfite + AMP + 2 H(+) = adenosine 5'-phosphosulfate + [thioredoxin]-dithiol. Its pathway is sulfur metabolism; hydrogen sulfide biosynthesis; sulfite from sulfate. Functionally, catalyzes the formation of sulfite from adenosine 5'-phosphosulfate (APS) using thioredoxin as an electron donor. The protein is Adenosine 5'-phosphosulfate reductase of Rhodococcus erythropolis (strain PR4 / NBRC 100887).